A 432-amino-acid polypeptide reads, in one-letter code: Bifunctional protein GlmU (432 aa).

The segment at 1 to 223 (MGKKSIIILA…EENFKGVNSK (223 aa)) is pyrophosphorylase. Residues 9–12 (LAAG), Lys-23, Gln-75, and 82–83 (GT) contribute to the UDP-N-acetyl-alpha-D-glucosamine site. Asp-103 lines the Mg(2+) pocket. UDP-N-acetyl-alpha-D-glucosamine contacts are provided by Gly-135, Glu-149, Asn-164, and Asn-221. Asn-221 contacts Mg(2+). Positions 224-244 (VELADAEVIHQNRIKKEFMKA) are linker. Positions 245–432 (GVIMRLPDTI…FYKHFSSKKK (188 aa)) are N-acetyltransferase. Residues Arg-308 and Lys-325 each contribute to the UDP-N-acetyl-alpha-D-glucosamine site. Catalysis depends on His-336, which acts as the Proton acceptor. UDP-N-acetyl-alpha-D-glucosamine is bound by residues Tyr-339 and Asn-350. Acetyl-CoA is bound by residues 359–360 (NY), Ser-378, Ala-396, and Arg-413.

This sequence in the N-terminal section; belongs to the N-acetylglucosamine-1-phosphate uridyltransferase family. It in the C-terminal section; belongs to the transferase hexapeptide repeat family. As to quaternary structure, homotrimer. Mg(2+) is required as a cofactor.

It is found in the cytoplasm. The enzyme catalyses alpha-D-glucosamine 1-phosphate + acetyl-CoA = N-acetyl-alpha-D-glucosamine 1-phosphate + CoA + H(+). It catalyses the reaction N-acetyl-alpha-D-glucosamine 1-phosphate + UTP + H(+) = UDP-N-acetyl-alpha-D-glucosamine + diphosphate. The protein operates within nucleotide-sugar biosynthesis; UDP-N-acetyl-alpha-D-glucosamine biosynthesis; N-acetyl-alpha-D-glucosamine 1-phosphate from alpha-D-glucosamine 6-phosphate (route II): step 2/2. It functions in the pathway nucleotide-sugar biosynthesis; UDP-N-acetyl-alpha-D-glucosamine biosynthesis; UDP-N-acetyl-alpha-D-glucosamine from N-acetyl-alpha-D-glucosamine 1-phosphate: step 1/1. It participates in bacterial outer membrane biogenesis; LPS lipid A biosynthesis. In terms of biological role, catalyzes the last two sequential reactions in the de novo biosynthetic pathway for UDP-N-acetylglucosamine (UDP-GlcNAc). The C-terminal domain catalyzes the transfer of acetyl group from acetyl coenzyme A to glucosamine-1-phosphate (GlcN-1-P) to produce N-acetylglucosamine-1-phosphate (GlcNAc-1-P), which is converted into UDP-GlcNAc by the transfer of uridine 5-monophosphate (from uridine 5-triphosphate), a reaction catalyzed by the N-terminal domain. This is Bifunctional protein GlmU from Aliarcobacter butzleri (strain RM4018) (Arcobacter butzleri).